Reading from the N-terminus, the 28-residue chain is 50 kDa venom protease (28 aa).

This sequence belongs to the venom metalloproteinase (M12B) family. The cofactor is Zn(2+). Expressed by the venom gland.

The protein resides in the secreted. This chain is 50 kDa venom protease, found in Proatheris superciliaris (Lowland swamp viper).